A 337-amino-acid polypeptide reads, in one-letter code: 25S rRNA (adenine(2142)-N(1))-methyltransferase (337 aa).

S-adenosyl-L-methionine-binding residues include glycine 180 and aspartate 201.

Belongs to the BMT2 family.

It is found in the nucleus. The protein resides in the nucleolus. The enzyme catalyses adenosine(2142) in 25S rRNA + S-adenosyl-L-methionine = N(1)-methyladenosine(2142) in 25S rRNA + S-adenosyl-L-homocysteine + H(+). Functionally, S-adenosyl-L-methionine-dependent methyltransferase that specifically methylates the N(1) position of adenine 2142 in 25S rRNA. N(1)-methyladenine(2142) in 25S rRNA is present in helix 65, a region that accounts for most of the intersubunit surface of the large subunit. The protein is 25S rRNA (adenine(2142)-N(1))-methyltransferase of Saccharomyces cerevisiae (strain ATCC 204508 / S288c) (Baker's yeast).